The sequence spans 173 residues: T cell receptor gamma constant 1 (173 aa).

The Ig-like domain maps to 10 to 104 (PKPTIFLPSI…NKNGVDQEII (95 aa)). A disulfide bridge links cysteine 32 with cysteine 88. 4 N-linked (GlcNAc...) asparagine glycosylation sites follow: asparagine 66, asparagine 120, asparagine 126, and asparagine 135. The helical transmembrane segment at 139–161 (YYMYLLLLLKSVVYFAIITCCLL) threads the bilayer.

Gamma-delta TR is a heterodimer composed of a gamma and delta chain; disulfide-linked. The gamma-delta TR is associated with the transmembrane signaling CD3 coreceptor proteins following the stoichiometry: a single gamma-delta TR heterodimer associates with one CD3D-CD3E heterodimer, one CD3G-CD3E heterodimer and one CD247 homodimer forming a stable octameric structure. Upon activation, gamma-delta TR complex associates with FCER1G to initiate intracellular signaling.

The protein localises to the cell membrane. Constant region of T cell receptor (TR) gamma chain that participates in the antigen recognition. Gamma-delta TRs recognize a variety of self and foreign non-peptide antigens frequently expressed at the epithelial boundaries between the host and external environment, including endogenous lipids presented by MH-like protein CD1D and phosphoantigens presented by butyrophilin-like molecule BTN3A1. Upon antigen recognition induces rapid, innate-like immune responses involved in pathogen clearance and tissue repair. Binding of gamma-delta TR complex to antigen triggers phosphorylation of immunoreceptor tyrosine-based activation motifs (ITAMs) in the CD3 chains by the LCK and FYN kinases, allowing the recruitment, phosphorylation, and activation of ZAP70 that facilitates phosphorylation of the scaffolding proteins LCP2 and LAT. This lead to the formation of a supramolecular signalosome that recruits the phospholipase PLCG1, resulting in calcium mobilization and ERK activation, ultimately leading to T cell expansion and differentiation into effector cells. Gamma-delta TRs are produced through somatic rearrangement of a limited repertoire of variable (V), diversity (D), and joining (J) genes. The potential diversity of gamma-delta TRs is conferred by the unique ability to rearrange (D) genes in tandem and to utilize all three reading frames. The combinatorial diversity is considerably increased by the sequence exonuclease trimming and random nucleotide (N) region additions which occur during the V-(D)-J rearrangements. The polypeptide is T cell receptor gamma constant 1 (Homo sapiens (Human)).